The primary structure comprises 833 residues: Leucine--tRNA ligase (833 aa).

The short motif at 41 to 52 (PYPSGAGLHVGH) is the 'HIGH' region element. The 'KMSKS' region signature appears at 610 to 614 (KMSKS). An ATP-binding site is contributed by K613.

The protein belongs to the class-I aminoacyl-tRNA synthetase family.

Its subcellular location is the cytoplasm. The catalysed reaction is tRNA(Leu) + L-leucine + ATP = L-leucyl-tRNA(Leu) + AMP + diphosphate. This Streptococcus agalactiae serotype III (strain NEM316) protein is Leucine--tRNA ligase.